The chain runs to 656 residues: DNA topoisomerase 3 (656 aa).

One can recognise a Toprim domain in the interval 2-156 (KVLCVAEKNS…QVYRAVFSHL (155 aa)). The Topo IA-type catalytic domain occupies 172–635 (DMKSVHAVGT…DIVEKYRKYW (464 aa)). Tyrosine 356 acts as the O-(5'-phospho-DNA)-tyrosine intermediate in catalysis.

Belongs to the type IA topoisomerase family. Forms a complex with SGS1 and RMI1. Interacts with SGS1.

The catalysed reaction is ATP-independent breakage of single-stranded DNA, followed by passage and rejoining.. In terms of biological role, releases the supercoiling and torsional tension of DNA introduced during the DNA replication and transcription by transiently cleaving and rejoining one strand of the DNA duplex. Introduces a single-strand break via transesterification at a target site in duplex DNA. The scissile phosphodiester is attacked by the catalytic tyrosine of the enzyme, resulting in the formation of a DNA-(5'-phosphotyrosyl)-enzyme intermediate and the expulsion of a 3'-OH DNA strand. The free DNA strand than undergoes passage around the unbroken strand thus removing DNA supercoils. Finally, in the religation step, the DNA 3'-OH attacks the covalent intermediate to expel the active-site tyrosine and restore the DNA phosphodiester backbone. Essential for proper chromosome segregation in both meiosis and mitosis. Weakly relaxes negative supercoils and displays a distinct preference for binding single-stranded DNA. The TOP3-SGS1 protein complex may function as a eukaryotic reverse gyrase introducing positive supercoils into extrachromosomal ribosomal DNA rings. This is DNA topoisomerase 3 (TOP3) from Saccharomyces cerevisiae (strain ATCC 204508 / S288c) (Baker's yeast).